Here is a 259-residue protein sequence, read N- to C-terminus: Truncated Ankyrin repeat protein OPG003 (259 aa).

Belongs to the orthopoxvirus OPG003 family.

The protein is Truncated Ankyrin repeat protein OPG003 (OPG003) of Vaccinia virus (strain Copenhagen) (VACV).